Consider the following 361-residue polypeptide: Ribosomal RNA large subunit methyltransferase M (361 aa).

S-adenosyl-L-methionine-binding positions include Ser-187, 220–223 (CPGG), Asp-239, Asp-259, and Asp-276. Lys-305 functions as the Proton acceptor in the catalytic mechanism.

This sequence belongs to the class I-like SAM-binding methyltransferase superfamily. RNA methyltransferase RlmE family. RlmM subfamily. In terms of assembly, monomer.

Its subcellular location is the cytoplasm. It carries out the reaction cytidine(2498) in 23S rRNA + S-adenosyl-L-methionine = 2'-O-methylcytidine(2498) in 23S rRNA + S-adenosyl-L-homocysteine + H(+). Its function is as follows. Catalyzes the 2'-O-methylation at nucleotide C2498 in 23S rRNA. This Shewanella baltica (strain OS223) protein is Ribosomal RNA large subunit methyltransferase M.